The sequence spans 359 residues: Fructose-bisphosphate aldolase (359 aa).

Phosphothreonine is present on Thr11. Residue Lys27 forms a Glycyl lysine isopeptide (Lys-Gly) (interchain with G-Cter in ubiquitin) linkage. Residues Ser56 and Ser63 each carry the phosphoserine modification. Residue Ser63 participates in D-glyceraldehyde 3-phosphate binding. Residue Lys73 forms a Glycyl lysine isopeptide (Lys-Gly) (interchain with G-Cter in ubiquitin) linkage. 2 positions are modified to phosphoserine: Ser76 and Ser83. Lys85 participates in a covalent cross-link: Glycyl lysine isopeptide (Lys-Gly) (interchain with G-Cter in ubiquitin). At Ser96 the chain carries Phosphoserine. Residue Asp110 is the Proton donor of the active site. The Zn(2+) site is built by His111 and Asp145. A Phosphoserine modification is found at Ser147. Residue Thr150 is modified to Phosphothreonine. Zn(2+) is bound at residue Glu175. A Phosphothreonine modification is found at Thr179. His227 lines the Zn(2+) pocket. Gly228 serves as a coordination point for dihydroxyacetone phosphate. His265 is a Zn(2+) binding site. Residues 266 to 268 and 287 to 290 contribute to the dihydroxyacetone phosphate site; these read GGS and NLDT. A Phosphoserine modification is found at Ser268. Position 290 is a phosphothreonine (Thr290). Lys308 participates in a covalent cross-link: Glycyl lysine isopeptide (Lys-Gly) (interchain with G-Cter in ubiquitin). Position 310 is a phosphotyrosine (Tyr310). Ser313 bears the Phosphoserine mark.

Belongs to the class II fructose-bisphosphate aldolase family. Homodimer. The cofactor is Zn(2+).

It carries out the reaction beta-D-fructose 1,6-bisphosphate = D-glyceraldehyde 3-phosphate + dihydroxyacetone phosphate. The protein operates within carbohydrate degradation; glycolysis; D-glyceraldehyde 3-phosphate and glycerone phosphate from D-glucose: step 4/4. Its function is as follows. Catalyzes the aldol condensation of dihydroxyacetone phosphate (DHAP or glycerone-phosphate) with glyceraldehyde 3-phosphate (G3P) to form fructose 1,6-bisphosphate (FBP) in gluconeogenesis and the reverse reaction in glycolysis. This chain is Fructose-bisphosphate aldolase (FBA1), found in Saccharomyces cerevisiae (strain ATCC 204508 / S288c) (Baker's yeast).